Here is a 419-residue protein sequence, read N- to C-terminus: UDP-N-acetylglucosamine 1-carboxyvinyltransferase (419 aa).

Phosphoenolpyruvate is bound at residue 22–23 (KN). R92 contacts UDP-N-acetyl-alpha-D-glucosamine. C116 serves as the catalytic Proton donor. C116 bears the 2-(S-cysteinyl)pyruvic acid O-phosphothioketal mark. Residues 121–125 (RPVDQ), D306, and I328 contribute to the UDP-N-acetyl-alpha-D-glucosamine site.

This sequence belongs to the EPSP synthase family. MurA subfamily.

Its subcellular location is the cytoplasm. The catalysed reaction is phosphoenolpyruvate + UDP-N-acetyl-alpha-D-glucosamine = UDP-N-acetyl-3-O-(1-carboxyvinyl)-alpha-D-glucosamine + phosphate. Its pathway is cell wall biogenesis; peptidoglycan biosynthesis. Its function is as follows. Cell wall formation. Adds enolpyruvyl to UDP-N-acetylglucosamine. Target for the antibiotic phosphomycin. This chain is UDP-N-acetylglucosamine 1-carboxyvinyltransferase, found in Acinetobacter guillouiae (Acinetobacter genomosp. 11).